Here is an 818-residue protein sequence, read N- to C-terminus: Sodium/hydrogen exchanger 1 (818 aa).

The Extracellular portion of the chain corresponds to 1 to 98; sequence MLLWPGASGL…FPVLGIDYQH (98 aa). The tract at residues 44 to 76 is disordered; that stretch reads STIRGSEPPRERSIGDVTTAPPELAPESRPVNH. N-linked (GlcNAc...) asparagine glycosylation is present at Asn75. The chain crosses the membrane as a helical span at residues 99–121; that stretch reads VRIPFEIALWILLACLMKIGFHV. Topologically, residues 122 to 130 are cytoplasmic; the sequence is IPTISSIVP. Residues 131–148 traverse the membrane as a helical segment; it reads ESCLLIVVGLLVGGLIKG. The Extracellular segment spans residues 149–158; it reads VGETPPILQS. A helical membrane pass occupies residues 159 to 176; that stretch reads EVFFLFLLPPIILDAGYF. At 177-186 the chain is on the cytoplasmic side; it reads LPLRQFTENL. The chain crosses the membrane as a helical span at residues 187-215; that stretch reads GTILIFAVVGTLWNAFFLGGLMYAVCLVG. Residues 216 to 222 lie on the Extracellular side of the membrane; the sequence is GEQINNI. The helical transmembrane segment at 223–249 threads the bilayer; sequence GLLENLLFGSIISAVDPVAVLAVFEEI. Over 250-252 the chain is Cytoplasmic; sequence HIN. The chain crosses the membrane as a helical span at residues 253–283; that stretch reads ELLHILVFGESLLNDAVTVVLYHLFEEFANY. The Extracellular segment spans residues 284-287; sequence DRVG. A helical membrane pass occupies residues 288–322; sequence IVDIILGFLSFFVVSLGGVFVGVVYGVIAAFTSRF. Topologically, residues 323-328 are cytoplasmic; sequence TSHIRV. The helical transmembrane segment at 329 to 341 threads the bilayer; it reads IEPLFVFLYSYMA. The Extracellular segment spans residues 342-350; sequence YLSAELFHL. The helical transmembrane segment at 351–371 threads the bilayer; it reads SGIMALIASGVVMRPYVEANI. The Cytoplasmic portion of the chain corresponds to 372-373; it reads SH. A helical transmembrane segment spans residues 374–404; sequence KSHTTIKYFLKMWSSVSETLIFIFLGVSTVA. The Extracellular portion of the chain corresponds to 405 to 410; sequence GSHHWN. The helical transmembrane segment at 411–438 threads the bilayer; the sequence is WTFVISTLLFCLIARVLGVLGLTWFINK. Topologically, residues 439 to 444 are cytoplasmic; sequence FRIVKL. Residues 445 to 469 traverse the membrane as a helical segment; that stretch reads TPKDQFIIAYGGLRGAIAFSLGYLL. Over 470–475 the chain is Extracellular; it reads DKKHFP. A helical membrane pass occupies residues 476–505; sequence MCDLFLTAIITVIFFTVFVQGMTIRPLVDL. The segment at 503-545 is interaction with TESC; it reads VDLLAVKKKQETKRSINEEIHTQFLDHLLTGIEDICGHYGHHH. Residues 506–818 lie on the Cytoplasmic side of the membrane; sequence LAVKKKQETK…EGEPFIPKGQ (313 aa). Residues 509–516 form a PI(4,5)P2-binding region region; that stretch reads KKKQETKR. The segment at 515–545 is interaction with CHP2; that stretch reads KRSINEEIHTQFLDHLLTGIEDICGHYGHHH. A confers pH-dependent PI(4,5)P2 binding region spans residues 540 to 545; the sequence is HYGHHH. A PI(4,5)P2-binding region region spans residues 552–560; the sequence is RFNKKYVKK. A phosphoserine mark is found at Ser599 and Ser602. A Phosphothreonine modification is found at Thr603. Ser605 and Ser648 each carry phosphoserine. The tract at residues 633-818 is interaction with TESC; that stretch reads KILRNNLQKT…EGEPFIPKGQ (186 aa). Residues 633–818 are interaction with CALM1; sequence KILRNNLQKT…EGEPFIPKGQ (186 aa). Residues 684–687 form an interaction with PPP3CA region; sequence LTVP. Phosphoserine occurs at positions 693, 697, and 703. The interval 715 to 720 is interaction with PPP3CA; sequence PVITID. A phosphoserine mark is found at Ser723, Ser726, and Ser729. The interval 741–818 is disordered; sequence VLGLSRDPGR…EGEPFIPKGQ (78 aa). Thr782 carries the post-translational modification Phosphothreonine. Over residues 785–794 the composition is skewed to polar residues; sequence PSDSPSSQRI. 3 positions are modified to phosphoserine: Ser788, Ser790, and Ser799.

The protein belongs to the monovalent cation:proton antiporter 1 (CPA1) transporter (TC 2.A.36) family. Homodimer; dimerization is crucial for its function. Oligomer. Interacts with CALM in a calcium-dependent manner. Interacts with TESC. Interacts (via the juxtamembrane region of the cytoplasmic C-terminal domain) with CHP1; the interaction occurs at the plasma membrane in a calcium-dependent manner. Interacts with CHP2; the interaction occurs in a calcium-dependent manner. Interacts with EZR; regulates the cytoskeletal interactions of SLC9A1 and promotes stress fiber formation. Post-translationally, ubiquitinated, leading to its degradation by the proteasome. Ubiquitination is reduced by CHP1. O-glycosylated. In terms of processing, palmitoylated; may play a major role in SLC9A1 regulation. Post-translationally, phosphorylation at Thr-782 increases SLC9A1 activity. Specifically dephosphorylated at Thr-782 by PPP3CA that negatively regulates SLC9A1 activity. Phosphorylation at Ser-648 by AKT1 reduces SLC9A1 binding to CALM1.

The protein resides in the cell membrane. It localises to the basolateral cell membrane. The catalysed reaction is Na(+)(in) + H(+)(out) = Na(+)(out) + H(+)(in). The enzyme catalyses Li(+)(out) + H(+)(in) = Li(+)(in) + H(+)(out). It catalyses the reaction Li(+)(in) + Na(+)(out) = Li(+)(out) + Na(+)(in). Activated at acidic pHs. Inhibited by amiloride and 5-amino-substituted derivatives. Inhibited by cariporide and eniporide. Phosphatidylinositol 4,5-bisphosphate (PI(4,5)P2) and phosphatidylinositol 3,4,5-trisphosphate (PI(3,4,5)P3) bind and differentially regulate SLC9A1 activity. In terms of biological role, electroneutral Na(+) /H(+) antiporter that extrudes Na(+) in exchange for external protons driven by the inward sodium ion chemical gradient, protecting cells from acidification that occurs from metabolism. Exchanges intracellular H(+) ions for extracellular Na(+) in 1:1 stoichiometry. Plays a key role in maintening intracellular pH neutral and cell volume, and thus is important for cell growth, proliferation, migration and survival. In addition, can transport lithium Li(+) and also functions as a Na(+)/Li(+) antiporter. SLC9A1 also functions in membrane anchoring and organization of scaffolding complexes that coordinate signaling inputs. In Bos taurus (Bovine), this protein is Sodium/hydrogen exchanger 1 (SLC9A1).